Here is a 520-residue protein sequence, read N- to C-terminus: Ribonuclease Y (520 aa).

The helical transmembrane segment at 5–25 (ITIISSLLFLIVGLVVGSLIF) threads the bilayer. The disordered stretch occupies residues 70–127 (RTEIENELRGRRTETQKAENRLLQREENLDRKDTSLSKREATLERKEESISKRQQQIE). One can recognise a KH domain in the interval 210 to 273 (TVSVVTLPND…EIARIALEKL (64 aa)). Residues 336 to 429 (VLNHSLEVSK…VAAADALSAA (94 aa)) enclose the HD domain.

Belongs to the RNase Y family.

The protein resides in the cell membrane. Its function is as follows. Endoribonuclease that initiates mRNA decay. The protein is Ribonuclease Y of Listeria welshimeri serovar 6b (strain ATCC 35897 / DSM 20650 / CCUG 15529 / CIP 8149 / NCTC 11857 / SLCC 5334 / V8).